A 1200-amino-acid polypeptide reads, in one-letter code: NACHT, LRR and PYD domains-containing protein 5 (1200 aa).

A Pyrin domain is found at 57 to 148 (SLTFSSYGLQ…SEKARDDMKR (92 aa)). The segment covering 142-152 (ARDDMKRHSPE) has biased composition (basic and acidic residues). The interval 142-232 (ARDDMKRHSP…TEEQGHGGDT (91 aa)) is disordered. Polar residues predominate over residues 173 to 182 (QAVQQDSATA). 2 stretches are compositionally biased toward low complexity: residues 192–202 (QAMEQEGATAA) and 209–221 (ISQA…ATAA). The NACHT domain occupies 280–602 (RTVVLHGKSG…ALYYVLEGLE (323 aa)). Residue 286–293 (GKSGIGKS) coordinates ATP. 13 LRR repeats span residues 704-727 (LNSF…SFCL), 730-753 (CPYL…AEAC), 780-803 (HPHL…TLCA), 809-832 (TCKI…LWRI), 836-863 (NRNL…ALKH), 865-892 (KCLL…ILTT), 893-916 (SPSL…PLSD), 950-973 (NRSL…LLCR), 979-1002 (HCSL…FLAL), 1007-1034 (NSWL…VMRE), 1036-1059 (SCHL…SLSC), 1064-1092 (SRHL…LKQK), and 1121-1142 (NRHL…MMKL).

This sequence belongs to the NLRP family. In terms of assembly, component of the subcortical maternal complex (SCMC), at least composed of NLRP5, KHDC3, OOEP, and TLE6 isoform 1. Within the complex, interacts with OOEP, KHDC3L and TLE6. The SCMC may facilitate translocation of its components between the nuclear and cytoplasmic compartments. As part of the SCMC interacts with the SCMC-associated protein ZBED3. As part of the SCMC interacts with the SCMC-associated protein CFL1/Cofilin-1. Interacts with PRKCE. Interacts with TUBB3 at cytoskeleton microtubules. Post-translationally, phosphorylated by PRKCE. Expressed in cumulus cells (at protein level). Highly abundant in oocytes and early embryos, however poorly expressed in somatic tissues such as the liver and spinal cord.

Its subcellular location is the cytoplasm. The protein localises to the cytoplasmic vesicle. It is found in the secretory vesicle. It localises to the cortical granule. The protein resides in the mitochondrion. Its subcellular location is the nucleus. The protein localises to the nucleolus. It is found in the golgi apparatus. In terms of biological role, component of the subcortical maternal complex (SCMC), a multiprotein complex that plays a key role in early embryonic development. The SCMC complex is a structural constituent of cytoplasmic lattices, which consist in fibrous structures found in the cytoplasm of oocytes and preimplantation embryos. They are required to store maternal proteins critical for embryonic development, such as proteins that control epigenetic reprogramming of the preimplantation embryo, and prevent their degradation or activation. Required for the localization of cortical granules to the cortex of oocytes, via association with the cortical actin scaffold. Required for cortical actin clearance prior to oocyte exocytosis and prevention of polyspermy. Involved in regulating post-fertilization Ca(2+) release and endoplasmic reticulum storage (ER) storage via regulation of cellular localization. May be involved in the localization of mitochondria to the cytoplasm and perinuclear region in oocytes and early stage embryos, independent of its role in CPL formation. This Homo sapiens (Human) protein is NACHT, LRR and PYD domains-containing protein 5 (NLRP5).